Consider the following 167-residue polypeptide: Chorion class CB protein PC404 (167 aa).

A left arm region spans residues 1-55; the sequence is IGREAIVGAGLQGPFGGPWPYDALSPFDMPYGPALPAMSCGAGSFGPSSGFAPAA. Positions 56–126 are central domain; that stretch reads AYGGGLAVTS…GDGAVGIVAE (71 aa). The right arm stretch occupies residues 127 to 167; that stretch reads TPFASTSVNPAYGYGGAIGGGVPYNSYGPIGYGGCGYNALY.

Belongs to the chorion protein family.

In terms of biological role, this protein is one of many from the eggshell of the silk moth. In Antheraea polyphemus (Polyphemus moth), this protein is Chorion class CB protein PC404.